A 586-amino-acid chain; its full sequence is Exocyst complex component EXO70A3 (586 aa).

N-linked (GlcNAc...) asparagine glycans are attached at residues N65 and N106. Positions 119–149 (CLPSNLRPPSDDEGSDGKSHDPQSNGLGKTD) are disordered. The helical transmembrane segment at 258 to 278 (FAEITTISFGMLLSFGYAIAI) threads the bilayer. N-linked (GlcNAc...) asparagine glycosylation is found at N321 and N487.

It belongs to the EXO70 family. Subunit of the exocyst complex. Confined to the outer layer of the columella cells in the root tips of young seedlings.

It is found in the membrane. Component of the exocyst complex involved in the docking of exocytic vesicles with fusion sites on the plasma membrane during regulated or polarized secretion. Involved in PIN4 exocytosis and gravitropic responses in columella cells. By monitoring PIN4 distribution in columella cells, modulates auxin repartition and subsequently regulates the root system architecture (RSA), thus being a component of the auxin-dependent root directional growth (ARD). In Arabidopsis thaliana (Mouse-ear cress), this protein is Exocyst complex component EXO70A3.